Reading from the N-terminus, the 202-residue chain is MSVVDLSLWEPRTELGRLVKEGKIRTIDEIFANNYIIKEPEIVDILLPGLKQEILNINVVQRQTHAGERSQFQVVVAVGNEDGYVGVGIGKAKQVRQAIEKAVREAKLNLTPVRRGCGSWKCSCDEPHSVPFVVRGKSGSVEVTLIPAPKGVGLVAGDVAKVVLRLAGIKDVWTQTRGDTRTTLNFAMAVYNALRNTYYFKI.

The S5 DRBM domain occupies 50–113 (LKQEILNINV…REAKLNLTPV (64 aa)).

This sequence belongs to the universal ribosomal protein uS5 family. In terms of assembly, part of the 30S ribosomal subunit. Contacts protein S4.

In terms of biological role, with S4 and S12 plays an important role in translational accuracy. This chain is Small ribosomal subunit protein uS5, found in Pyrobaculum islandicum (strain DSM 4184 / JCM 9189 / GEO3).